We begin with the raw amino-acid sequence, 128 residues long: Sulfurtransferase TusD (128 aa).

Catalysis depends on Cys-78, which acts as the Cysteine persulfide intermediate.

Belongs to the DsrE/TusD family. Heterohexamer, formed by a dimer of trimers. The hexameric TusBCD complex contains 2 copies each of TusB, TusC and TusD. The TusBCD complex interacts with TusE.

Its subcellular location is the cytoplasm. Its function is as follows. Part of a sulfur-relay system required for 2-thiolation of 5-methylaminomethyl-2-thiouridine (mnm(5)s(2)U) at tRNA wobble positions. Accepts sulfur from TusA and transfers it in turn to TusE. The chain is Sulfurtransferase TusD from Shigella boydii serotype 18 (strain CDC 3083-94 / BS512).